We begin with the raw amino-acid sequence, 237 residues long: Ribonuclease PH (237 aa).

Residues Arg-86 and 124–126 (GTR) contribute to the phosphate site.

Belongs to the RNase PH family. Homohexameric ring arranged as a trimer of dimers.

The catalysed reaction is tRNA(n+1) + phosphate = tRNA(n) + a ribonucleoside 5'-diphosphate. Its function is as follows. Phosphorolytic 3'-5' exoribonuclease that plays an important role in tRNA 3'-end maturation. Removes nucleotide residues following the 3'-CCA terminus of tRNAs; can also add nucleotides to the ends of RNA molecules by using nucleoside diphosphates as substrates, but this may not be physiologically important. Probably plays a role in initiation of 16S rRNA degradation (leading to ribosome degradation) during starvation. This is Ribonuclease PH from Methylobacterium sp. (strain 4-46).